The chain runs to 188 residues: 3-deoxy-D-manno-octulosonate 8-phosphate phosphatase KdsC (188 aa).

Positions 32 and 34 each coordinate Mg(2+). Substrate-binding positions include aspartate 34, 55 to 59, arginine 63, arginine 78, arginine 86, and lysine 102; that span reads NVRDG. Aspartate 125 is a binding site for Mg(2+).

Belongs to the KdsC family. In terms of assembly, homotetramer. Mg(2+) is required as a cofactor.

The catalysed reaction is 3-deoxy-alpha-D-manno-2-octulosonate-8-phosphate + H2O = 3-deoxy-alpha-D-manno-oct-2-ulosonate + phosphate. Its pathway is carbohydrate biosynthesis; 3-deoxy-D-manno-octulosonate biosynthesis; 3-deoxy-D-manno-octulosonate from D-ribulose 5-phosphate: step 3/3. The protein operates within bacterial outer membrane biogenesis; lipopolysaccharide biosynthesis. Functionally, catalyzes the hydrolysis of 3-deoxy-D-manno-octulosonate 8-phosphate (KDO 8-P) to 3-deoxy-D-manno-octulosonate (KDO) and inorganic phosphate. This chain is 3-deoxy-D-manno-octulosonate 8-phosphate phosphatase KdsC, found in Escherichia coli (strain K12).